The chain runs to 80 residues: Protein P9 (80 aa).

In terms of assembly, self-associates.

The polypeptide is Protein P9 (Beta vulgaris (Sugar beet)).